A 510-amino-acid polypeptide reads, in one-letter code: MEEIRRYLQLERSQQHDFLYPLIFQEYIYAFAHDRGFSRSILLENENPGYDNKSSLLVMKRLITRMYQQNHFLISPNDFNQKNPFFAHNKNLYSQIIAEGFAFIVEIPFSLRLISEGKKKKIVKSQNLRSIHSIFPFLEDNFSYLNFVLDILIPHPVHVEILVQTLRYWVKDASSLHLLRFFLNKYWNSLITPKKASSSFSTRNQRLFVFLYNSHVSEYESSFVFLRNQSSHLGSTPFGVLLERIYFYGKIERLVNVFVKVKDFRANLWLVKEPCIHYIRYQRKFILASKGTSLFMNKWKCYLITFWQWHFSLWFYPRRIYINQLSNHSFAFLGYLSSLRMNPSVVRSQSLENAFLINNAIKKVDTLVPIIPMIASLAKAKFCNVFGHPISKPVRADLSDSNIIDRFGCICRNFSHYYSGSSKKKSLYRIKYILRLSCARTLARKHKSTVRTFLKKLGSELLEEFLLSEEDVLFLTFPKASPSLQGVYRSRIWYLDIISINDLVDHKSKF.

The protein belongs to the intron maturase 2 family. MatK subfamily.

The protein resides in the plastid. In terms of biological role, usually encoded in the trnK tRNA gene intron. Probably assists in splicing its own and other chloroplast group II introns. This chain is Maturase K, found in Bartsia alpina (Velvet bells).